The following is a 271-amino-acid chain: Small ribosomal subunit protein uS2 (271 aa).

Residues 223–271 (RALAGSEEGEATEEVTPASEAEKQEVLAEAMSEEGDALQESEVVEEEEK) are disordered. Acidic residues predominate over residues 253–271 (MSEEGDALQESEVVEEEEK).

It belongs to the universal ribosomal protein uS2 family.

In Wolinella succinogenes (strain ATCC 29543 / DSM 1740 / CCUG 13145 / JCM 31913 / LMG 7466 / NCTC 11488 / FDC 602W) (Vibrio succinogenes), this protein is Small ribosomal subunit protein uS2.